A 589-amino-acid chain; its full sequence is UvrABC system protein C (589 aa).

The 78-residue stretch at 10-87 (ESSGVYLMKK…IKKYSPKYNI (78 aa)) folds into the GIY-YIG domain. The region spanning 197–232 (SKLINELTALMNKASQDMDFEKSIIYREQIKELKSI) is the UVR domain.

Belongs to the UvrC family. In terms of assembly, interacts with UvrB in an incision complex.

The protein resides in the cytoplasm. Functionally, the UvrABC repair system catalyzes the recognition and processing of DNA lesions. UvrC both incises the 5' and 3' sides of the lesion. The N-terminal half is responsible for the 3' incision and the C-terminal half is responsible for the 5' incision. The polypeptide is UvrABC system protein C (Fusobacterium nucleatum subsp. nucleatum (strain ATCC 25586 / DSM 15643 / BCRC 10681 / CIP 101130 / JCM 8532 / KCTC 2640 / LMG 13131 / VPI 4355)).